The sequence spans 809 residues: MRTSVIPNRLTPTLTTHPSRRRNDHITTRTSSLKCHLSPSSGDNNDSFNSSLLKTISTTVAVSSAAASAFFLTGSLHSPFPNFSGLNAAAGGGAGGGGGGSSSSGGGGGGWFNGDEGSFWSRILSPARAIADEPKSEDWDSHELPADITVLLGRLSGFKKYKISDILFFDRNKKSKVETQDSFLDMVSLKPGGVYTKAQLQKELESLATCGMFEKVDMEGKTNADGSLGLTISFAESMWERADRFRCINVGLMGQSKPVEMDPDMSEKEKIEFFRRQEREYKRRISSARPCLLPTSVHEEIKDMLAEQGRVSARLLQKIRDRVQSWYHEEGYACAQVVNFGNLNTREVVCEVVEGDITKLSIQYLDKLGNVVEGNTEGPVVQRELPKQLLPGHTFNIEAGKQALRNINSLALFSNIEVNPRPDEMNEGSIIVEIKLKELEQKSAEVSTEWSIVPGRGGRPTLASLQPGGTITFEHRNLQGLNRSLTGSVTTSNFLNPQDDLAFKMEYAHPYLDGVDNPRNRTLRVSCFNSRKLSPVFTGGPGVDEVPSIWVDRAGVKANITENFSRQSKFTYGLVMEEIITRDESNHICSNGQRVLPNGAISADGPPTTLSGTGIDRMAFLQANITRDNTRFVNGTIVGSRNMFQVDQGLGVGSNFPFFNRHQLTVTKFLQLMSVEEGAGKSPPPVLVLHGHYGGCVGDLPSYDAFTLGGPYSVRGYNMGEIGAARNILELAAEIRIPIKGTHVYAFAEHGTDLGSSKDVKGNPTVVYRRMGQGSSYGAGMKLGLVRAEYAVDHNSGTGAVFFRFGERF.

The segment covering Met1 to His17 has biased composition (polar residues). The transit peptide at Met1–Cys35 directs the protein to the chloroplast. The tract at residues Met1–Asn44 is disordered. The transit peptide at His36 to Ala131 directs the protein to the chloroplast; outer membrane. Residues Asp132–Glu143 are Chloroplast intermembrane-facing. A beta stranded membrane pass occupies residues Leu144–Leu152. At Gly153–Lys160 the chain is on the cytoplasmic side. Residues Tyr161–Phe169 traverse the membrane as a beta stranded segment. Residues Asp170 to Asp225 lie on the Chloroplast intermembrane side of the membrane. Residues Gly226 to Phe234 traverse the membrane as a beta stranded segment. Residues Ala235–Cys247 lie on the Cytoplasmic side of the membrane. A beta stranded transmembrane segment spans residues Ile248 to Gly254. At Gln255 to Ile357 the chain is on the chloroplast intermembrane side. Residues Thr358–Leu365 traverse the membrane as a beta stranded segment. Topologically, residues Asp366 to Leu410 are cytoplasmic. Residues Ala411–Val418 traverse the membrane as a beta stranded segment. Residues Asn419–Glu427 lie on the Chloroplast intermembrane side of the membrane. A beta stranded membrane pass occupies residues Gly428–Leu436. Over Lys437–Lys442 the chain is Cytoplasmic. Residues Ser443–Ile452 traverse the membrane as a beta stranded segment. Residues Val453–Ser464 lie on the Chloroplast intermembrane side of the membrane. Residues Leu465–Phe473 form a beta stranded membrane-spanning segment. The Cytoplasmic portion of the chain corresponds to Glu474 to Asp500. The beta stranded transmembrane segment at Leu501–His509 threads the bilayer. Over Pro510–Arg553 the chain is Chloroplast intermembrane. A beta stranded membrane pass occupies residues Ala554 to Thr561. At Glu562–Lys569 the chain is on the cytoplasmic side. A beta stranded membrane pass occupies residues Phe570–Glu577. At Glu578–Pro684 the chain is on the chloroplast intermembrane side. The beta stranded transmembrane segment at Pro685–Tyr693 threads the bilayer. Over Gly694 to Ala705 the chain is Cytoplasmic. Residues Phe706 to Val714 form a beta stranded membrane-spanning segment. At Arg715 to Ser776 the chain is on the chloroplast intermembrane side. Residues Tyr777–Leu783 form a beta stranded membrane-spanning segment. Residues Gly784–Gly797 are Cytoplasmic-facing. A beta stranded membrane pass occupies residues Thr798–Phe805. Topologically, residues Gly806 to Phe809 are chloroplast intermembrane.

It belongs to the TOC75 family. Part of the TOC core complex that includes a protein for the specific recognition of transit peptides surrounded by a ring composed of four proteins forming translocation channels, and four to five GTP-binding proteins providing energy. This core complex can interact with components of the TIC complex to form a larger import complex. Chloroplastic protein precursors such as prSS (precursor of the RuBisCO small subunit) also interact with these complexes. TOC75 interacts with OEP14, TOC34/OEP34, TOC86/OEP86, TIC55, TIC110/IEP110 and CLPC. In terms of tissue distribution, mostly expressed in young leaves, also present in old leaves, roots and stems (at protein level).

The protein localises to the plastid. The protein resides in the chloroplast outer membrane. In terms of biological role, mediates the insertion of proteins targeted to the outer membrane of chloroplasts. Required for the import of protein precursors into chloroplasts. Forms the voltage-dependent preprotein translocation channels (hydrophilic beta barrel) of the TOC complex in the chloroplastic outer membrane. The narrowest inner diameter of this channel is approximately 14 Angstroms. This Pisum sativum (Garden pea) protein is Protein TOC75, chloroplastic (TOC75).